Consider the following 27-residue polypeptide: Palustrin-1d (27 aa).

Cysteine 21 and cysteine 27 are joined by a disulfide.

As to expression, expressed by the skin glands.

It localises to the secreted. Its function is as follows. Antimicrobial activity against Gram-negative bacterium E.coli. This Lithobates palustris (Pickerel frog) protein is Palustrin-1d.